Here is an 840-residue protein sequence, read N- to C-terminus: Recyclin-1 (840 aa).

Residues 1–48 (MDDLLKVPEIVTNIASYLSTVDYLSFQQVNKRVYAIINGKNDSKYWSL) enclose the F-box domain. S409 is subject to Phosphoserine.

Interacts with SKP1.

It is found in the cytoplasm. Its subcellular location is the bud neck. The protein resides in the cell tip. Functionally, involved in recycling plasma membrane proteins internalized by endocytosis. Required for recycling of the v-SNARE SNC1. This chain is Recyclin-1 (RCY1), found in Saccharomyces cerevisiae (strain ATCC 204508 / S288c) (Baker's yeast).